Here is a 673-residue protein sequence, read N- to C-terminus: MASSPGLDPHPLPMLQLQEVGSSKVSERPRSPGLLPAVYSPPLGMDSHTVCIPSPYTDSSHEYNHSHGPLTFYSPSVLSYSRPPITNSPSSLCPSLSPSAFWPSHNHPTMPSLTLHCPESIVYNEPSPHAPWLESKAHSINASSSSIIGCNKSLVKRSEEGVEDMNSSLCSSAVGKADMHFCAVCHDYASGYHYGVWSCEGCKAFFKRSIQGHNDYICPATNQCTIDKNRRKSCQACRLRKCYEVGMMKCGVRRERCSYRGARHRRGGLQPRDPTGRGLVRVGLGSRAQRHLHLEAPLTPLAPILQAKHVHLSAMSPEEFISRIMDAEPPEIYLMEDLKKPFTEASMMMSLTNLADKELVFMISWAKKIPGFVELSLADQINLLKCCWLEILMLGLMWRSVDHPGKLIFSPDFKLNREEGQCVEGIMEIFDMLLAGTSRFRELKLQREEYVCLKAMILLNSNLCTSSPQTAEELESRNKLLRLLDSVIDALVWAISKMGLTTQQQTLRLGHLTMLLSHIRHVSNKGMDHLSTMKRKNVVLVYDLLLEMLDANTSSGGSQPSSSPSSETYSDQHQYPQPPSHLHPGSEQTTADHAIVPPLGPTDDPILDGHLDAMPLQSSPPFQSLVVPHMDTNDYIHPEQWSLGTGDAAPSVEPTDYITTERVVMETALVTQP.

A modulating region spans residues Met-1–Phe-181. 2 NR C4-type zinc fingers span residues Cys-182 to Cys-202 and Cys-218 to Cys-242. Positions Cys-182 to Met-247 form a DNA-binding region, nuclear receptor. Residues Ser-316–Asn-552 enclose the NR LBD domain. The tract at residues Thr-553–Thr-602 is disordered. Low complexity predominate over residues Ser-554–Ser-566.

This sequence belongs to the nuclear hormone receptor family. NR3 subfamily. As to quaternary structure, binds DNA as a homodimer. Can form a heterodimer with ER-alpha. In terms of tissue distribution, abundant in the liver and testes, less abundant in the ovary and barely detectable in the muscle.

Its subcellular location is the nucleus. In terms of biological role, binds estrogens with an affinity similar to that of ER-alpha, and activates expression of reporter genes containing estrogen response elements (ERE) in an estrogen-dependent manner. The sequence is that of Estrogen receptor beta (esr2) from Micropogonias undulatus (Atlantic croaker).